The following is a 390-amino-acid chain: Ureide permease 1 (390 aa).

Residues 1–9 (MYMIESKGG) are Extracellular-facing. A helical transmembrane segment spans residues 10-30 (AIACMLLALLFLGTWPAIMTL). The Cytoplasmic segment spans residues 31–44 (TERRGRLPQHTYLD). The helical transmembrane segment at 45–65 (YTLTNLLAAVIIALTLGEIGP) threads the bilayer. Residues 66–78 (SRPNFFTQLSQDN) lie on the Extracellular side of the membrane. The helical transmembrane segment at 79 to 99 (WQSVMFAMAGGIVLSLGNLAT) threads the bilayer. At 100–101 (QY) the chain is on the cytoplasmic side. The helical transmembrane segment at 102–122 (AWAYVGLSVTEVITASITVVI) threads the bilayer. At 123–136 (GTTLNYFLDDRINR) the chain is on the extracellular side. Residues 137–157 (AEVLFPGVACFLIAVCFGSAV) traverse the membrane as a helical segment. The Cytoplasmic segment spans residues 158 to 221 (HKSNAADNKT…RAIKVFGKST (64 aa)). 213 to 220 (AIKVFGKS) serves as a coordination point for ATP. The helical transmembrane segment at 222–242 (IIGLVITFFAGICFSLFSPAF) threads the bilayer. The Extracellular portion of the chain corresponds to 243–261 (NLATNDQWHTLKHGVPKLN). The chain crosses the membrane as a helical span at residues 262-282 (VYTAFFYFSISAFVVALILNI). The Cytoplasmic portion of the chain corresponds to 283 to 307 (RFLYWPILGLPRSSFKAYLNDWNGR). A helical membrane pass occupies residues 308–328 (GWSFLAGFLCGFGNGLQFMGG). Topologically, residues 329–333 (QAAGY) are extracellular. Residues 334-354 (AAADAVQALPLVSTFWGILLF) traverse the membrane as a helical segment. The Cytoplasmic portion of the chain corresponds to 355 to 363 (GEYRRSSRK). The helical transmembrane segment at 364 to 384 (TYTLLISMLLMFIVAVAVLMA) threads the bilayer. Residues 385–390 (SSGHRK) are Extracellular-facing.

The protein belongs to the plant ureide permease (TC 2.A.7.19) family. In terms of tissue distribution, expressed in leaves, flowers, roots and stems.

The protein resides in the membrane. Its function is as follows. Proton-coupled transporter that transports a wide spectrum of oxo derivatives of heterocyclic nitrogen compounds, including allantoin, uric acid and xanthine, but not adenine. Mediates high affinity transport of uracil and 5-fluorouracil (a toxic uracil analog). Mediates transport of free pyrimidines and may function during early seedling development in salvage pathways, by the utilization of pyrimidines from seed storage tissue. The polypeptide is Ureide permease 1 (Arabidopsis thaliana (Mouse-ear cress)).